Here is a 293-residue protein sequence, read N- to C-terminus: Acetyl-coenzyme A carboxylase carboxyl transferase subunit beta (293 aa).

Residues 29–293 enclose the CoA carboxyltransferase N-terminal domain; it reads LWSKCPECGQ…GCKPMELTSA (265 aa). Residues C33, C36, C52, and C55 each contribute to the Zn(2+) site. The C4-type zinc-finger motif lies at 33–55; sequence CPECGQVVYLKDLKLNASVCANC.

Belongs to the AccD/PCCB family. Acetyl-CoA carboxylase is a heterohexamer composed of biotin carboxyl carrier protein (AccB), biotin carboxylase (AccC) and two subunits each of ACCase subunit alpha (AccA) and ACCase subunit beta (AccD). It depends on Zn(2+) as a cofactor.

The protein resides in the cytoplasm. The enzyme catalyses N(6)-carboxybiotinyl-L-lysyl-[protein] + acetyl-CoA = N(6)-biotinyl-L-lysyl-[protein] + malonyl-CoA. The protein operates within lipid metabolism; malonyl-CoA biosynthesis; malonyl-CoA from acetyl-CoA: step 1/1. Functionally, component of the acetyl coenzyme A carboxylase (ACC) complex. Biotin carboxylase (BC) catalyzes the carboxylation of biotin on its carrier protein (BCCP) and then the CO(2) group is transferred by the transcarboxylase to acetyl-CoA to form malonyl-CoA. This chain is Acetyl-coenzyme A carboxylase carboxyl transferase subunit beta, found in Synechococcus sp. (strain CC9605).